We begin with the raw amino-acid sequence, 234 residues long: Sugar fermentation stimulation protein A (234 aa).

The H-T-H motif DNA-binding region spans 201 to 220 (LLSEAQQRGVEILAYKAEIS).

It belongs to the SfsA family.

Its function is as follows. Binds to DNA non-specifically. Could be a regulatory factor involved in maltose metabolism. The polypeptide is Sugar fermentation stimulation protein A (Shigella flexneri).